The primary structure comprises 367 residues: Probable L-aspartate decarboxylase (367 aa).

K216 is modified (N6-(pyridoxal phosphate)lysine).

This sequence belongs to the group II decarboxylase family. MfnA subfamily. Pyridoxal 5'-phosphate is required as a cofactor.

The catalysed reaction is L-aspartate + H(+) = beta-alanine + CO2. It participates in cofactor biosynthesis; coenzyme A biosynthesis. In terms of biological role, catalyzes the decarboxylation of L-aspartate to produce beta-alanine. The sequence is that of Probable L-aspartate decarboxylase from Archaeoglobus fulgidus (strain ATCC 49558 / DSM 4304 / JCM 9628 / NBRC 100126 / VC-16).